The following is a 782-amino-acid chain: Phosphoribosylformylglycinamidine synthase subunit PurL (782 aa).

The active site involves His-48. Residues Tyr-51 and Lys-90 each coordinate ATP. Residue Glu-92 participates in Mg(2+) binding. Substrate contacts are provided by residues 93 to 96 and Arg-115; that span reads SHNH. His-94 functions as the Proton acceptor in the catalytic mechanism. Asp-116 serves as a coordination point for Mg(2+). Position 239 (Gln-239) interacts with substrate. Asp-267 is a Mg(2+) binding site. Position 311–313 (311–313) interacts with substrate; that stretch reads ESQ. ATP-binding residues include Asp-525 and Gly-562. Asn-563 is a Mg(2+) binding site. Ser-565 provides a ligand contact to substrate.

This sequence belongs to the FGAMS family. In terms of assembly, monomer. Part of the FGAM synthase complex composed of 1 PurL, 1 PurQ and 2 PurS subunits.

The protein localises to the cytoplasm. The enzyme catalyses N(2)-formyl-N(1)-(5-phospho-beta-D-ribosyl)glycinamide + L-glutamine + ATP + H2O = 2-formamido-N(1)-(5-O-phospho-beta-D-ribosyl)acetamidine + L-glutamate + ADP + phosphate + H(+). It participates in purine metabolism; IMP biosynthesis via de novo pathway; 5-amino-1-(5-phospho-D-ribosyl)imidazole from N(2)-formyl-N(1)-(5-phospho-D-ribosyl)glycinamide: step 1/2. In terms of biological role, part of the phosphoribosylformylglycinamidine synthase complex involved in the purines biosynthetic pathway. Catalyzes the ATP-dependent conversion of formylglycinamide ribonucleotide (FGAR) and glutamine to yield formylglycinamidine ribonucleotide (FGAM) and glutamate. The FGAM synthase complex is composed of three subunits. PurQ produces an ammonia molecule by converting glutamine to glutamate. PurL transfers the ammonia molecule to FGAR to form FGAM in an ATP-dependent manner. PurS interacts with PurQ and PurL and is thought to assist in the transfer of the ammonia molecule from PurQ to PurL. The polypeptide is Phosphoribosylformylglycinamidine synthase subunit PurL (Nostoc sp. (strain PCC 7120 / SAG 25.82 / UTEX 2576)).